A 1434-amino-acid polypeptide reads, in one-letter code: Probable ATP-dependent RNA helicase spindle-E (1434 aa).

Residues 125-292 form the Helicase ATP-binding domain; the sequence is LAAINAHPVV…FTTTNSIPPV (168 aa). Position 138-145 (138-145) interacts with ATP; that stretch reads GETGCGKT. The DEAH box signature appears at 238 to 241; sequence DEVH. The region spanning 354–526 is the Helicase C-terminal domain; it reads QSRQSYDEAL…NSVLKAKVLN (173 aa). In terms of domain architecture, Tudor spans 938–1001; it reads ASAIAKGMMV…RLMPRELTEQ (64 aa).

Belongs to the DEAD box helicase family. DEAH subfamily.

The protein localises to the cytoplasm. It localises to the perinuclear region. It is found in the cytoplasmic ribonucleoprotein granule. It catalyses the reaction ATP + H2O = ADP + phosphate + H(+). In terms of biological role, probable ATP-binding RNA helicase which plays a central role during spermatogenesis and oogenesis by repressing transposable elements and preventing their mobilization, which is essential for the germline integrity. Acts via the piRNA metabolic process, which mediates the repression of transposable elements during meiosis by forming complexes composed of piRNAs and Piwi and govern the methylation and subsequent repression of transposons. Involved in the repression of LTR retrotransposon copia. Also involved in telomere regulation by repressing specialized telomeric retroelements HeT-A, TAHRE, and TART; Drosophila telomeres being maintained by transposition of specialized telomeric retroelements. Involved in telomeric trans-silencing, a repression mechanism by which a transposon or a transgene inserted in subtelomeric heterochromatin has the capacity to repress in trans in the female germline, a homologous transposon, or transgene located in euchromatin. Involved in the repression of testis-expressed Stellate genes by the homologous Su(Ste) repeats. Required for anteroposterior and dorsoventral axis formation during oogenesis. Key component of the perinuclear meiotic nuage, an electron dense structure involved in the post-transcriptional regulation of transposons and mRNAs; required for recruitment of other nuage comonents including vas, krimp, aub and mael. May have a role in production of piwi-interacting RNA (piRNA). The protein is Probable ATP-dependent RNA helicase spindle-E of Drosophila melanogaster (Fruit fly).